The following is a 206-amino-acid chain: MITFVRGMLAEVGPRSGQSWATVDVGGVGYRVWTHARTVGKLPRIGEEVKLFTLMIVREDAMQLFGFLEPGERELFGQLVSVSGIGPRMGLALLETLAPTELVQAILQGNTRALALAPGVGAKTAQRLALELRSRLSKWREESGLSAMGARASSRVYEEVELALLALGFAPGEVVRALDAVAPAMAGEEQTEAWLRAAIAWLSEQG.

The domain I stretch occupies residues 1–68 (MITFVRGMLA…EDAMQLFGFL (68 aa)). Residues 69–147 (EPGERELFGQ…KWREESGLSA (79 aa)) are domain II. The flexible linker stretch occupies residues 147-151 (AMGAR). The domain III stretch occupies residues 152–206 (ASSRVYEEVELALLALGFAPGEVVRALDAVAPAMAGEEQTEAWLRAAIAWLSEQG).

This sequence belongs to the RuvA family. Homotetramer. Forms an RuvA(8)-RuvB(12)-Holliday junction (HJ) complex. HJ DNA is sandwiched between 2 RuvA tetramers; dsDNA enters through RuvA and exits via RuvB. An RuvB hexamer assembles on each DNA strand where it exits the tetramer. Each RuvB hexamer is contacted by two RuvA subunits (via domain III) on 2 adjacent RuvB subunits; this complex drives branch migration. In the full resolvosome a probable DNA-RuvA(4)-RuvB(12)-RuvC(2) complex forms which resolves the HJ.

It is found in the cytoplasm. In terms of biological role, the RuvA-RuvB-RuvC complex processes Holliday junction (HJ) DNA during genetic recombination and DNA repair, while the RuvA-RuvB complex plays an important role in the rescue of blocked DNA replication forks via replication fork reversal (RFR). RuvA specifically binds to HJ cruciform DNA, conferring on it an open structure. The RuvB hexamer acts as an ATP-dependent pump, pulling dsDNA into and through the RuvAB complex. HJ branch migration allows RuvC to scan DNA until it finds its consensus sequence, where it cleaves and resolves the cruciform DNA. The protein is Holliday junction branch migration complex subunit RuvA of Gloeobacter violaceus (strain ATCC 29082 / PCC 7421).